The sequence spans 491 residues: NADH-quinone oxidoreductase subunit N 1 (491 aa).

14 helical membrane-spanning segments follow: residues 15 to 35 (VLGMPAFLMIWAMLVLIVDMF), 41 to 61 (VLLTLSLIGLGVTAALGALDY), 77 to 97 (FGVLVNWILLAGTALTLLIAF), 105 to 125 (LSQGEFYPLVLFATSGMLFLV), 130 to 150 (LVTIFIGVETLSIALYVLTGF), 165 to 185 (LLLGGFAAGFLVYGIALIYGM), 211 to 231 (PILLAGVGFVLIALGFKVSMF), 247 to 269 (PVTAYMSVATKGAAFAAMLRFLN), 279 to 299 (WQLLFGLFAAATMAYGNIVAV), 307 to 327 (MLAYSSIAHAGYMLLGVLAAS), 333 to 353 (AFTVYLLAYTLTNLGAFAVLI), 378 to 398 (LALAMTVFMFSLAGVPPTAGF), 416 to 436 (LAIIGVVTSVISAFFYLRVIV), and 459 to 479 (LGVIVAVIGIIAVGILPNIFT).

It belongs to the complex I subunit 2 family. In terms of assembly, NDH-1 is composed of 14 different subunits. Subunits NuoA, H, J, K, L, M, N constitute the membrane sector of the complex.

The protein resides in the cell membrane. It catalyses the reaction a quinone + NADH + 5 H(+)(in) = a quinol + NAD(+) + 4 H(+)(out). Functionally, NDH-1 shuttles electrons from NADH, via FMN and iron-sulfur (Fe-S) centers, to quinones in the respiratory chain. The immediate electron acceptor for the enzyme in this species is believed to be ubiquinone. Couples the redox reaction to proton translocation (for every two electrons transferred, four hydrogen ions are translocated across the cytoplasmic membrane), and thus conserves the redox energy in a proton gradient. The protein is NADH-quinone oxidoreductase subunit N 1 of Herpetosiphon aurantiacus (strain ATCC 23779 / DSM 785 / 114-95).